The chain runs to 345 residues: Phosphate acyltransferase (345 aa).

Belongs to the PlsX family. In terms of assembly, homodimer. Probably interacts with PlsY.

It localises to the cytoplasm. It carries out the reaction a fatty acyl-[ACP] + phosphate = an acyl phosphate + holo-[ACP]. Its pathway is lipid metabolism; phospholipid metabolism. Functionally, catalyzes the reversible formation of acyl-phosphate (acyl-PO(4)) from acyl-[acyl-carrier-protein] (acyl-ACP). This enzyme utilizes acyl-ACP as fatty acyl donor, but not acyl-CoA. The sequence is that of Phosphate acyltransferase from Wolbachia sp. subsp. Drosophila simulans (strain wRi).